Here is a 202-residue protein sequence, read N- to C-terminus: dITP/XTP pyrophosphatase (202 aa).

8-13 (TKNMGK) contributes to the substrate binding site. 2 residues coordinate Mg(2+): glutamate 41 and aspartate 70. The active-site Proton acceptor is aspartate 70. Substrate-binding positions include serine 71, 155–158 (FGYD), lysine 178, and 183–184 (HR).

The protein belongs to the HAM1 NTPase family. As to quaternary structure, homodimer. Mg(2+) is required as a cofactor.

It carries out the reaction XTP + H2O = XMP + diphosphate + H(+). The enzyme catalyses dITP + H2O = dIMP + diphosphate + H(+). The catalysed reaction is ITP + H2O = IMP + diphosphate + H(+). In terms of biological role, pyrophosphatase that catalyzes the hydrolysis of nucleoside triphosphates to their monophosphate derivatives, with a high preference for the non-canonical purine nucleotides XTP (xanthosine triphosphate), dITP (deoxyinosine triphosphate) and ITP. Seems to function as a house-cleaning enzyme that removes non-canonical purine nucleotides from the nucleotide pool, thus preventing their incorporation into DNA/RNA and avoiding chromosomal lesions. The polypeptide is dITP/XTP pyrophosphatase (Bacillus anthracis).